A 332-amino-acid polypeptide reads, in one-letter code: Hdr-like menaquinol oxidoreductase cytochrome b-like subunit (332 aa).

Helical transmembrane passes span 3 to 23, 97 to 117, 143 to 163, 177 to 197, and 230 to 250; these read GVIF…IGVI, DARW…LVLI, VFIP…FLLW, LPSD…GNVM, and IEPI…YFPF.

Consists of five subunits: an integral membrane subunit, a cytochrome b-like subunit, a cytochrome c subunit and two iron-sulfur subunits.

Its subcellular location is the cell membrane. Functionally, has menaquinol-oxidizing activity. HmeC and HmeD subunits may together mediate electron transfer from menaquinol to an unidentified electron acceptor on the cytoplasmic side of the membrane. This is Hdr-like menaquinol oxidoreductase cytochrome b-like subunit (hmeC) from Archaeoglobus fulgidus (strain ATCC 49558 / DSM 4304 / JCM 9628 / NBRC 100126 / VC-16).